We begin with the raw amino-acid sequence, 329 residues long: MYVLGIESTAHTIGVGIVNERAEVLANEMHTYVPKEGGIHPREAARHHAEWGPRLVKRALEVAGLRPEDLDAVAYSAGPGLGPCLRTGAVMARALAAFYEKPLVPVNHSLAHIEIARAVTGFSKPVAIYVSGGSTIISAPAIKRYRVYGETLDIGLGNLLDTFAREVGIGPPFVKGGVHVVELCSEGAEEPADLPYTVQGVDLSFSGLLTAALRAWKKEDKKKVCYGLWETAYDMVVEVGERALAHSKLKEVVLVGGVAGSKRLQRKVALMSEERGVSFKPIPYELARDNGAMIAWTGLLYYKHGFTVAPEEAFVRQRWRLDEVEVPWL.

Residues H108, H112, and Y129 each contribute to the Fe cation site. Substrate contacts are provided by residues 129–133, D161, E182, and S261; that span reads YVSGG. D289 lines the Fe cation pocket.

The protein belongs to the KAE1 / TsaD family. Fe(2+) is required as a cofactor.

It is found in the cytoplasm. It catalyses the reaction L-threonylcarbamoyladenylate + adenosine(37) in tRNA = N(6)-L-threonylcarbamoyladenosine(37) in tRNA + AMP + H(+). In terms of biological role, required for the formation of a threonylcarbamoyl group on adenosine at position 37 (t(6)A37) in tRNAs that read codons beginning with adenine. Is probably involved in the transfer of the threonylcarbamoyl moiety of threonylcarbamoyl-AMP (TC-AMP) to the N6 group of A37. The polypeptide is tRNA N6-adenosine threonylcarbamoyltransferase (Ignicoccus hospitalis (strain KIN4/I / DSM 18386 / JCM 14125)).